The following is a 113-amino-acid chain: MNQFYVHVRLFEDTAEQTKKFEELMLNFLYQKTVKESDDSCCRLIPEGYILKSTMNCQQILDQTFSIANSAGVDANIFVCKFEQSACLLPSASLVGNDFVHYDLTPKPIKLDS.

This is an uncharacterized protein from Escherichia coli (strain K12).